The sequence spans 201 residues: Small ribosomal subunit protein uS4 (201 aa).

Positions 91 to 157 constitute an S4 RNA-binding domain; it reads CRLDNVVYRA…TPFIIAKETI (67 aa).

This sequence belongs to the universal ribosomal protein uS4 family. Part of the 30S ribosomal subunit. Contacts protein S5. The interaction surface between S4 and S5 is involved in control of translational fidelity.

One of the primary rRNA binding proteins, it binds directly to 16S rRNA where it nucleates assembly of the body of the 30S subunit. Its function is as follows. With S5 and S12 plays an important role in translational accuracy. This chain is Small ribosomal subunit protein uS4, found in Saccharopolyspora erythraea (strain ATCC 11635 / DSM 40517 / JCM 4748 / NBRC 13426 / NCIMB 8594 / NRRL 2338).